The primary structure comprises 292 residues: L-serine dehydratase, alpha chain (292 aa).

Belongs to the iron-sulfur dependent L-serine dehydratase family. Heterooctamer of four alpha chains and four beta chains. It depends on [4Fe-4S] cluster as a cofactor.

It carries out the reaction L-serine = pyruvate + NH4(+). Its pathway is carbohydrate biosynthesis; gluconeogenesis. In Peptoniphilus asaccharolyticus (Peptostreptococcus asaccharolyticus), this protein is L-serine dehydratase, alpha chain (sdhA).